A 271-amino-acid chain; its full sequence is Shikimate dehydrogenase (NADP(+)) (271 aa).

Residues 19–21 (SLS) and Thr65 contribute to the shikimate site. The active-site Proton acceptor is the Lys69. Glu81 serves as a coordination point for NADP(+). Asn90 and Asp105 together coordinate shikimate. NADP(+) is bound by residues 128 to 132 (GAGGA), 150 to 155 (NRTIEK), and Ile211. Tyr213 provides a ligand contact to shikimate. Gly234 contacts NADP(+).

Belongs to the shikimate dehydrogenase family. As to quaternary structure, homodimer.

It carries out the reaction shikimate + NADP(+) = 3-dehydroshikimate + NADPH + H(+). It participates in metabolic intermediate biosynthesis; chorismate biosynthesis; chorismate from D-erythrose 4-phosphate and phosphoenolpyruvate: step 4/7. Its function is as follows. Involved in the biosynthesis of the chorismate, which leads to the biosynthesis of aromatic amino acids. Catalyzes the reversible NADPH linked reduction of 3-dehydroshikimate (DHSA) to yield shikimate (SA). The sequence is that of Shikimate dehydrogenase (NADP(+)) from Pyrococcus furiosus (strain ATCC 43587 / DSM 3638 / JCM 8422 / Vc1).